We begin with the raw amino-acid sequence, 527 residues long: Phosphoenolpyruvate carboxykinase (ATP) (527 aa).

Residues Arg-56, Tyr-192, and Lys-198 each contribute to the substrate site. Residues Lys-198, His-217, and Gly-233 to Thr-241 each bind ATP. Mn(2+) contacts are provided by Lys-198 and His-217. Residue Asp-254 participates in Mn(2+) binding. Residues Glu-282, Arg-319, and Thr-444 each coordinate ATP. Arg-319 lines the substrate pocket.

Belongs to the phosphoenolpyruvate carboxykinase (ATP) family. It depends on Mn(2+) as a cofactor.

The protein resides in the cytoplasm. The catalysed reaction is oxaloacetate + ATP = phosphoenolpyruvate + ADP + CO2. Its pathway is carbohydrate biosynthesis; gluconeogenesis. Functionally, involved in the gluconeogenesis. Catalyzes the conversion of oxaloacetate (OAA) to phosphoenolpyruvate (PEP) through direct phosphoryl transfer between the nucleoside triphosphate and OAA. This Bacillus subtilis (strain 168) protein is Phosphoenolpyruvate carboxykinase (ATP).